The chain runs to 90 residues: UPF0237 protein PAE3582 (90 aa).

The 70-residue stretch at 5-74 (VVSVLGADRV…LEEEGKRLGV (70 aa)) folds into the ACT domain.

The protein belongs to the UPF0237 family.

This chain is UPF0237 protein PAE3582, found in Pyrobaculum aerophilum (strain ATCC 51768 / DSM 7523 / JCM 9630 / CIP 104966 / NBRC 100827 / IM2).